Consider the following 379-residue polypeptide: Queuine tRNA-ribosyltransferase (379 aa).

Residue aspartate 94 is the Proton acceptor of the active site. Residues 94-98, aspartate 148, glutamine 191, and glycine 218 contribute to the substrate site; that span reads DSGGF. The RNA binding stretch occupies residues 249 to 255; that stretch reads GVGSPDS. Aspartate 268 acts as the Nucleophile in catalysis. Residues 273 to 277 are RNA binding; important for wobble base 34 recognition; sequence TRIAR. Zn(2+) contacts are provided by cysteine 306, cysteine 308, cysteine 311, and histidine 337.

The protein belongs to the queuine tRNA-ribosyltransferase family. Homodimer. Within each dimer, one monomer is responsible for RNA recognition and catalysis, while the other monomer binds to the replacement base PreQ1. Requires Zn(2+) as cofactor.

The catalysed reaction is 7-aminomethyl-7-carbaguanine + guanosine(34) in tRNA = 7-aminomethyl-7-carbaguanosine(34) in tRNA + guanine. It participates in tRNA modification; tRNA-queuosine biosynthesis. Functionally, catalyzes the base-exchange of a guanine (G) residue with the queuine precursor 7-aminomethyl-7-deazaguanine (PreQ1) at position 34 (anticodon wobble position) in tRNAs with GU(N) anticodons (tRNA-Asp, -Asn, -His and -Tyr). Catalysis occurs through a double-displacement mechanism. The nucleophile active site attacks the C1' of nucleotide 34 to detach the guanine base from the RNA, forming a covalent enzyme-RNA intermediate. The proton acceptor active site deprotonates the incoming PreQ1, allowing a nucleophilic attack on the C1' of the ribose to form the product. After dissociation, two additional enzymatic reactions on the tRNA convert PreQ1 to queuine (Q), resulting in the hypermodified nucleoside queuosine (7-(((4,5-cis-dihydroxy-2-cyclopenten-1-yl)amino)methyl)-7-deazaguanosine). This Listeria monocytogenes serotype 4a (strain HCC23) protein is Queuine tRNA-ribosyltransferase.